We begin with the raw amino-acid sequence, 281 residues long: ATP phosphoribosyltransferase (281 aa).

Belongs to the ATP phosphoribosyltransferase family. Long subfamily. It depends on Mg(2+) as a cofactor.

The protein localises to the cytoplasm. The catalysed reaction is 1-(5-phospho-beta-D-ribosyl)-ATP + diphosphate = 5-phospho-alpha-D-ribose 1-diphosphate + ATP. Its pathway is amino-acid biosynthesis; L-histidine biosynthesis; L-histidine from 5-phospho-alpha-D-ribose 1-diphosphate: step 1/9. With respect to regulation, feedback inhibited by histidine. Its function is as follows. Catalyzes the condensation of ATP and 5-phosphoribose 1-diphosphate to form N'-(5'-phosphoribosyl)-ATP (PR-ATP). Has a crucial role in the pathway because the rate of histidine biosynthesis seems to be controlled primarily by regulation of HisG enzymatic activity. The protein is ATP phosphoribosyltransferase of Corynebacterium jeikeium (strain K411).